We begin with the raw amino-acid sequence, 247 residues long: ATP synthase subunit a, chloroplastic (247 aa).

A run of 5 helical transmembrane segments spans residues 38–58 (QVLI…LIAV), 95–115 (VPFI…GALL), 134–154 (INTT…AGLS), 199–219 (LVVV…VMFL), and 220–240 (GLFT…AYIG).

This sequence belongs to the ATPase A chain family. As to quaternary structure, F-type ATPases have 2 components, CF(1) - the catalytic core - and CF(0) - the membrane proton channel. CF(1) has five subunits: alpha(3), beta(3), gamma(1), delta(1), epsilon(1). CF(0) has four main subunits: a, b, b' and c.

The protein localises to the plastid. The protein resides in the chloroplast thylakoid membrane. In terms of biological role, key component of the proton channel; it plays a direct role in the translocation of protons across the membrane. In Brachypodium distachyon (Purple false brome), this protein is ATP synthase subunit a, chloroplastic.